We begin with the raw amino-acid sequence, 309 residues long: Homoserine O-acetyltransferase (309 aa).

C142 acts as the Acyl-thioester intermediate in catalysis. Substrate-binding residues include K163 and S192. Catalysis depends on H235, which acts as the Proton acceptor. E237 is an active-site residue. R249 serves as a coordination point for substrate.

The protein belongs to the MetA family.

It is found in the cytoplasm. The enzyme catalyses L-homoserine + acetyl-CoA = O-acetyl-L-homoserine + CoA. It participates in amino-acid biosynthesis; L-methionine biosynthesis via de novo pathway; O-acetyl-L-homoserine from L-homoserine: step 1/1. Functionally, transfers an acetyl group from acetyl-CoA to L-homoserine, forming acetyl-L-homoserine. The sequence is that of Homoserine O-acetyltransferase from Petrotoga mobilis (strain DSM 10674 / SJ95).